The primary structure comprises 443 residues: ATP-dependent protease ATPase subunit HslU (443 aa).

ATP is bound by residues Ile20, 62 to 67 (GVGKTE), Asp255, Glu321, and Arg393.

The protein belongs to the ClpX chaperone family. HslU subfamily. As to quaternary structure, a double ring-shaped homohexamer of HslV is capped on each side by a ring-shaped HslU homohexamer. The assembly of the HslU/HslV complex is dependent on binding of ATP.

The protein resides in the cytoplasm. Its function is as follows. ATPase subunit of a proteasome-like degradation complex; this subunit has chaperone activity. The binding of ATP and its subsequent hydrolysis by HslU are essential for unfolding of protein substrates subsequently hydrolyzed by HslV. HslU recognizes the N-terminal part of its protein substrates and unfolds these before they are guided to HslV for hydrolysis. This is ATP-dependent protease ATPase subunit HslU from Helicobacter pylori (strain HPAG1).